A 185-amino-acid chain; its full sequence is Intraflagellar transport protein 22 homolog (185 aa).

GTP-binding positions include 10–17 (GPCESGKT), 63–67 (DCGGD), and 123–126 (HKPG). Ser137 is modified (phosphoserine).

Belongs to the small GTPase superfamily. Rab family. As to quaternary structure, component of the IFT complex B, at least composed of IFT20, IFT22, IFT25, IFT27, IFT46, IFT52, TRAF3IP1/IFT54, IFT57, IFT74, IFT80, IFT81, and IFT88. Interacts with IFT88. Interacts with CFAP61.

It localises to the cell projection. It is found in the cilium. Functionally, small GTPase-like component of the intraflagellar transport (IFT) complex B. This is Intraflagellar transport protein 22 homolog (IFT22) from Homo sapiens (Human).